Reading from the N-terminus, the 204-residue chain is Cytochrome c biogenesis ATP-binding export protein CcmA (204 aa).

An ABC transporter domain is found at leucine 3–leucine 204. Glycine 35–threonine 42 is a binding site for ATP.

This sequence belongs to the ABC transporter superfamily. CcmA exporter (TC 3.A.1.107) family. The complex is composed of two ATP-binding proteins (CcmA) and two transmembrane proteins (CcmB).

The protein localises to the cell membrane. The enzyme catalyses heme b(in) + ATP + H2O = heme b(out) + ADP + phosphate + H(+). Functionally, part of the ABC transporter complex CcmAB involved in the biogenesis of c-type cytochromes; once thought to export heme, this seems not to be the case, but its exact role is uncertain. Responsible for energy coupling to the transport system. This chain is Cytochrome c biogenesis ATP-binding export protein CcmA, found in Ruegeria pomeroyi (strain ATCC 700808 / DSM 15171 / DSS-3) (Silicibacter pomeroyi).